Consider the following 298-residue polypeptide: Probable pyridoxal 5'-phosphate synthase subunit SNZ2 (298 aa).

Position 21 (Asp-21) interacts with D-ribose 5-phosphate. The Schiff-base intermediate with D-ribose 5-phosphate role is filled by Lys-78. Residues Gly-150, Gly-213, and 234–235 (GS) each bind D-ribose 5-phosphate.

Belongs to the PdxS/SNZ family. As to quaternary structure, homohexamer. Interacts with THI11.

The catalysed reaction is aldehydo-D-ribose 5-phosphate + D-glyceraldehyde 3-phosphate + L-glutamine = pyridoxal 5'-phosphate + L-glutamate + phosphate + 3 H2O + H(+). Its pathway is cofactor biosynthesis; pyridoxal 5'-phosphate biosynthesis. Functionally, catalyzes the formation of pyridoxal 5'-phosphate from ribose 5-phosphate (RBP), glyceraldehyde 3-phosphate (G3P) and ammonia. The ammonia is provided by a SNO isoform. Can also use ribulose 5-phosphate and dihydroxyacetone phosphate as substrates, resulting from enzyme-catalyzed isomerization of RBP and G3P, respectively. This chain is Probable pyridoxal 5'-phosphate synthase subunit SNZ2 (SNZ2), found in Saccharomyces cerevisiae (strain ATCC 204508 / S288c) (Baker's yeast).